The sequence spans 192 residues: MAAIRKKLVIVGDGACGKTCLLIVFSKDQFPDVYVPTVFENYVADIEVDGKQVELALWDTAGQEDYDRLRPLSYPDTDVILMCFSIDSPDSLENIPEKWTPEVRHFCPNVPIILVGNKRDLRSDPQTVRELAKMKQEPVKPEQGRAIAEQIGAFAYLECSAKTKDGIREVFEKATQAALQQKKKKKSKCMIL.

GTP is bound at residue 12-19; sequence GDGACGKT. Residues 34–42 carry the Effector region motif; it reads YVPTVFENY. Residues 59–63 and 117–120 each bind GTP; these read DTAGQ and NKRD. At cysteine 189 the chain carries Cysteine methyl ester. The S-geranylgeranyl cysteine moiety is linked to residue cysteine 189. The propeptide at 190–192 is removed in mature form; the sequence is MIL.

This sequence belongs to the small GTPase superfamily. Rho family. As to quaternary structure, may interact with unc-89 (via DN and PH domains). Interacts with bli-3 and memo-1. In terms of tissue distribution, in larvae and adults, enriched at the tip of the head where the anterior sensory organ is located and in the pharyngeal nerve ring (at protein level). In embryos, enriched at the boundaries of dorsal cells undergoing intercalation, ventral enclosure and elongation.

Its subcellular location is the cell membrane. The protein resides in the cytoplasm. It localises to the cytoskeleton. It is found in the cell cortex. GTP hydrolysis is stimulated by unc-89. Its function is as follows. Required for ventral migration of epidermal cells during ventral enclosure in the embryo and for cell elongation. Also required for ventral migration of P cells during larval development. Involved in asymmetric spindle positioning during anaphase and establishment of cell polarity during embryo development. In adults, involved in regulation of multiple processes including locomotion, pharyngeal pumping, fecundity, ovulation, defecation and body morphology. In body wall muscles, regulates organization of myosin thick filaments downstream of unc-89. Association with the oxidase bli-3 promotes ROS production and this interaction may be modulated by memo-1, in order to control the oxidative stress response and longevity. The chain is Ras-like GTP-binding protein rhoA from Caenorhabditis elegans.